Consider the following 687-residue polypeptide: Fimbrin-5 (687 aa).

The EF-hand domain maps to 7 to 74 (VLVSDPWLQS…KSVLDKSYPN (68 aa)). 4 consecutive Calponin-homology (CH) domains span residues 122-239 (ESEK…KIQM), 267-370 (LAPE…QHRN), 392-498 (SREE…RYTM), and 513-621 (EITD…YWSL). Actin-binding stretches follow at residues 122–370 (ESEK…QHRN) and 392–621 (SREE…YWSL). Residues 628 to 687 (ESTVSEDATDDGDANSVAGEISNLSIDGASESSPTVQDQELLTKADNDEDEVDGENNKDA) form a disordered region. The segment covering 649-667 (SNLSIDGASESSPTVQDQE) has biased composition (polar residues).

As to quaternary structure, interacts with F-actin. Expressed in mature pollen.

It localises to the cytoplasm. The protein resides in the cytoskeleton. Cross-links actin filaments (F-actin) in a calcium independent manner. Induces the formation of actin bundles. Stabilizes and prevents F-actin depolymerization mediated by latrunculin B (LatB). The chain is Fimbrin-5 from Arabidopsis thaliana (Mouse-ear cress).